A 1047-amino-acid chain; its full sequence is [F-actin]-monooxygenase MICAL1 (1047 aa).

The segment at 1–489 (MASPTSTNPA…QDLYDIMDKE (489 aa)) is monooxygenase domain. FAD contacts are provided by residues Cys95, 114 to 116 (EKR), 121 to 123 (RHN), Phe181, Tyr293, and Asp393. At Thr475 the chain carries Phosphothreonine. A Calponin-homology (CH) domain is found at 507-611 (SAGTEELLHW…YLSHFHSAFK (105 aa)). Phosphoserine is present on Ser616. The disordered stretch occupies residues 644–672 (RTKVEEETPCTEEPPVSEPSVPPALPSEH). Pro residues predominate over residues 659 to 668 (VSEPSVPPAL). Residues 679 to 741 (DVCELCGKRL…LQHLPQEDQK (63 aa)) form the LIM zinc-binding domain. The Zn(2+) site is built by Cys681, Cys684, His702, Cys705, Cys708, Cys711, Cys731, and His734. Disordered stretches follow at residues 739–787 (DQKE…QPAR) and 849–872 (EKGE…PPPL). Residues 745–767 (NNGSPENQELPTPGDSTTQSGPS) are compositionally biased toward polar residues. Phosphoserine occurs at positions 777 and 781. The span at 851–868 (GEEEEEEEEEEEEEEEEL) shows a compositional bias: acidic residues. The bMERB domain occupies 905-1047 (KEEEMKRFCK…EERRLREMPV (143 aa)). The stretch at 912–996 (FCKAQAIQRR…LEEKQRQLDH (85 aa)) forms a coiled coil.

The protein belongs to the Mical family. Interacts with STK38 and STK38L. Associates with the SH3 domain of NEDD9. Interacts with VIM and PLXNA3. Interacts with RAB1B, RAB8A, RAB10, RAB13 and RAB15 (in their GTP-bound forms); binding to RAB1B is of low affinity compared to other Rab proteins; at least in case of RAB8A and RAB10 can bind 2 molecules of the Rab proteins simultaneously. Interacts with GRAF1/ARHGAP26, GRAF2/ARHGAP10, RAB8A, RAB8B and RAB10; may bind simultaneously to GRAFs and Rabs and connects GRAFs to Rabs. Does not interact with RAB1 and RAB11A. FAD serves as cofactor.

The protein localises to the cytoplasm. Its subcellular location is the cytoskeleton. The protein resides in the endosome membrane. It is found in the midbody. It catalyses the reaction L-methionyl-[F-actin] + NADPH + O2 + H(+) = L-methionyl-(R)-S-oxide-[F-actin] + NADP(+) + H2O. It carries out the reaction NADPH + O2 + H(+) = H2O2 + NADP(+). Monooxygenase that promotes depolymerization of F-actin by mediating oxidation of specific methionine residues on actin to form methionine-sulfoxide, resulting in actin filament disassembly and preventing repolymerization. In the absence of actin, it also functions as a NADPH oxidase producing H(2)O(2). Acts as a cytoskeletal regulator that connects NEDD9 to intermediate filaments. Also acts as a negative regulator of apoptosis via its interaction with STK38 and STK38L; acts by antagonizing STK38 and STK38L activation by MST1/STK4. Involved in regulation of lamina-specific connectivity in the nervous system such as the development of lamina-restricted hippocampal connections. Through redox regulation of the actin cytoskeleton controls the intracellular distribution of secretory vesicles containing L1/neurofascin/NgCAM family proteins in neurons, thereby regulating their cell surface levels. May act as Rab effector protein and play a role in vesicle trafficking. Promotes endosomal tubule extension by associating with RAB8 (RAB8A or RAB8B), RAB10 and GRAF (GRAF1/ARHGAP26 or GRAF2/ARHGAP10) on the endosomal membrane which may connect GRAFs to Rabs, thereby participating in neosynthesized Rab8-Rab10-Rab11-dependent protein export. This is [F-actin]-monooxygenase MICAL1 (Mical1) from Rattus norvegicus (Rat).